A 577-amino-acid chain; its full sequence is Gamma-tubulin complex component gfh1 (577 aa).

Belongs to the TUBGCP family.

The protein resides in the cytoplasm. Its subcellular location is the cytoskeleton. It localises to the microtubule organizing center. It is found in the spindle pole body. Its function is as follows. Required for proper anchoring of astral microtubules at the spindle pole bodies (SPBs), during anaphase, ensuring correct cell polarity. In Schizosaccharomyces pombe (strain 972 / ATCC 24843) (Fission yeast), this protein is Gamma-tubulin complex component gfh1 (gfh1).